Here is a 691-residue protein sequence, read N- to C-terminus: Elongation factor G (691 aa).

In terms of domain architecture, tr-type G spans 8-282; that stretch reads ERVRNIGIAA…AVVDYLPAPI (275 aa). GTP-binding positions include 17 to 24, 81 to 85, and 135 to 138; these read AHIDAGKT, DTPGH, and NKMD.

The protein belongs to the TRAFAC class translation factor GTPase superfamily. Classic translation factor GTPase family. EF-G/EF-2 subfamily.

It is found in the cytoplasm. In terms of biological role, catalyzes the GTP-dependent ribosomal translocation step during translation elongation. During this step, the ribosome changes from the pre-translocational (PRE) to the post-translocational (POST) state as the newly formed A-site-bound peptidyl-tRNA and P-site-bound deacylated tRNA move to the P and E sites, respectively. Catalyzes the coordinated movement of the two tRNA molecules, the mRNA and conformational changes in the ribosome. The chain is Elongation factor G from Prochlorococcus marinus subsp. pastoris (strain CCMP1986 / NIES-2087 / MED4).